The chain runs to 219 residues: Arginine transport system permease protein ArtQ (219 aa).

A run of 5 helical transmembrane segments spans residues 19–39 (LAIT…LGIV), 51–73 (FIWI…QLMI), 88–108 (QFWA…SEII), 149–169 (AIVN…VIGL), and 187–207 (LEPL…LTFI). The ABC transmembrane type-1 domain occupies 19-208 (LAITLKIVVV…VLVLILTFIG (190 aa)).

It belongs to the binding-protein-dependent transport system permease family. HisMQ subfamily.

It is found in the cell membrane. Part of a binding-protein-dependent transport system for arginine. Probably responsible for the translocation of the substrate across the membrane. The chain is Arginine transport system permease protein ArtQ (artQ) from Bacillus subtilis (strain 168).